Reading from the N-terminus, the 319-residue chain is tRNA uridine(34) hydroxylase (319 aa).

Residues 125-219 (LDENTVVIDA…YGKDPEVQGD (95 aa)) form the Rhodanese domain. Residue Cys-179 is the Cysteine persulfide intermediate of the active site.

It belongs to the TrhO family.

The catalysed reaction is uridine(34) in tRNA + AH2 + O2 = 5-hydroxyuridine(34) in tRNA + A + H2O. In terms of biological role, catalyzes oxygen-dependent 5-hydroxyuridine (ho5U) modification at position 34 in tRNAs. The protein is tRNA uridine(34) hydroxylase of Lactococcus lactis subsp. cremoris (strain MG1363).